The following is a 35-amino-acid chain: Apolipophorin-3 (35 aa).

In terms of assembly, equilibrium between a soluble monomer and a bound lipoprotein form. Apolipophorin-3 associates with lipophorin during lipid loading until each particle contains 9 or 14 molecules of apolipophorin-3. As to expression, hemolymph.

It localises to the secreted. Its function is as follows. Assists in the loading of diacylglycerol, generated from triacylglycerol stores in the fat body through the action of adipokinetic hormone, into lipophorin, the hemolymph lipoprotein. It increases the lipid carrying capacity of lipophorin by covering the expanding hydrophobic surface resulting from diacylglycerol uptake. It thus plays a critical role in the transport of lipids during flight in several species of insects. Has hemagglutinating activity towards rabbit erythrocytes. This chain is Apolipophorin-3, found in Heliothis virescens (Tobacco budworm moth).